Here is a 393-residue protein sequence, read N- to C-terminus: Fructose-bisphosphate aldolase 4, cytosolic (393 aa).

R73 lines the substrate pocket. Position 207 is an S-glutathionyl cysteine; transient; alternate (C207). S-nitrosocysteine; transient; alternate is present on C207. The Proton acceptor role is filled by E217. K259 functions as the Schiff-base intermediate with dihydroxyacetone-P in the catalytic mechanism. Residues 301–303 (SGG) and R333 each bind substrate.

It belongs to the class I fructose-bisphosphate aldolase family. In terms of assembly, homotetramer. Post-translationally, S-glutathionylated at Cys-207. S-nitrosylated at Cys-207. In terms of tissue distribution, highly expressed in flowers.

It localises to the cytoplasm. The protein localises to the cytosol. The catalysed reaction is beta-D-fructose 1,6-bisphosphate = D-glyceraldehyde 3-phosphate + dihydroxyacetone phosphate. It functions in the pathway carbohydrate degradation; glycolysis; D-glyceraldehyde 3-phosphate and glycerone phosphate from D-glucose: step 4/4. In terms of biological role, fructose-bisphosphate aldolase that plays a key role in glycolysis and gluconeogenesis. This is Fructose-bisphosphate aldolase 4, cytosolic from Arabidopsis thaliana (Mouse-ear cress).